The following is a 220-amino-acid chain: 6-phosphogluconolactonase (220 aa).

This sequence belongs to the glucosamine/galactosamine-6-phosphate isomerase family. 6-phosphogluconolactonase subfamily.

The catalysed reaction is 6-phospho-D-glucono-1,5-lactone + H2O = 6-phospho-D-gluconate + H(+). It participates in carbohydrate degradation; pentose phosphate pathway; D-ribulose 5-phosphate from D-glucose 6-phosphate (oxidative stage): step 2/3. In terms of biological role, hydrolysis of 6-phosphogluconolactone to 6-phosphogluconate. The sequence is that of 6-phosphogluconolactonase (pgl) from Thermotoga maritima (strain ATCC 43589 / DSM 3109 / JCM 10099 / NBRC 100826 / MSB8).